Reading from the N-terminus, the 78-residue chain is MNNQYIRREVFCCGTCHELKSFWEKEISKQTFYRELEEDRQERSALKKLREEWRQRLERRLRMLDNPVEKEKPAHTAD.

It belongs to the FAM240 family.

This Homo sapiens (Human) protein is Protein FAM240B.